The sequence spans 91 residues: UPF0250 protein Lcho_4239 (91 aa).

Belongs to the UPF0250 family.

This is UPF0250 protein Lcho_4239 from Leptothrix cholodnii (strain ATCC 51168 / LMG 8142 / SP-6) (Leptothrix discophora (strain SP-6)).